The sequence spans 351 residues: Histidinol-phosphate aminotransferase (351 aa).

Residue K221 is modified to N6-(pyridoxal phosphate)lysine.

This sequence belongs to the class-II pyridoxal-phosphate-dependent aminotransferase family. Histidinol-phosphate aminotransferase subfamily. In terms of assembly, homodimer. The cofactor is pyridoxal 5'-phosphate.

It carries out the reaction L-histidinol phosphate + 2-oxoglutarate = 3-(imidazol-4-yl)-2-oxopropyl phosphate + L-glutamate. The protein operates within amino-acid biosynthesis; L-histidine biosynthesis; L-histidine from 5-phospho-alpha-D-ribose 1-diphosphate: step 7/9. In Staphylococcus saprophyticus subsp. saprophyticus (strain ATCC 15305 / DSM 20229 / NCIMB 8711 / NCTC 7292 / S-41), this protein is Histidinol-phosphate aminotransferase.